A 295-amino-acid chain; its full sequence is GTP cyclohydrolase FolE2 (295 aa).

It belongs to the GTP cyclohydrolase IV family.

It catalyses the reaction GTP + H2O = 7,8-dihydroneopterin 3'-triphosphate + formate + H(+). The protein operates within cofactor biosynthesis; 7,8-dihydroneopterin triphosphate biosynthesis; 7,8-dihydroneopterin triphosphate from GTP: step 1/1. Converts GTP to 7,8-dihydroneopterin triphosphate. In Pseudomonas putida (strain W619), this protein is GTP cyclohydrolase FolE2.